The following is an 81-amino-acid chain: Photosystem I iron-sulfur center (81 aa).

4Fe-4S ferredoxin-type domains lie at 2–31 (SHSV…MIPW) and 39–68 (IASA…VRVY). Cysteine 11, cysteine 14, cysteine 17, cysteine 21, cysteine 48, cysteine 51, cysteine 54, and cysteine 58 together coordinate [4Fe-4S] cluster.

The eukaryotic PSI reaction center is composed of at least 11 subunits. The cofactor is [4Fe-4S] cluster.

It is found in the plastid. It localises to the chloroplast thylakoid membrane. The catalysed reaction is reduced [plastocyanin] + hnu + oxidized [2Fe-2S]-[ferredoxin] = oxidized [plastocyanin] + reduced [2Fe-2S]-[ferredoxin]. Apoprotein for the two 4Fe-4S centers FA and FB of photosystem I (PSI); essential for photochemical activity. FB is the terminal electron acceptor of PSI, donating electrons to ferredoxin. The C-terminus interacts with PsaA/B/D and helps assemble the protein into the PSI complex. Required for binding of PsaD and PsaE to PSI. PSI is a plastocyanin-ferredoxin oxidoreductase, converting photonic excitation into a charge separation, which transfers an electron from the donor P700 chlorophyll pair to the spectroscopically characterized acceptors A0, A1, FX, FA and FB in turn. The chain is Photosystem I iron-sulfur center from Vitis vinifera (Grape).